We begin with the raw amino-acid sequence, 349 residues long: Protein-glutamate methylesterase/protein-glutamine glutaminase (349 aa).

One can recognise a Response regulatory domain in the interval 5-122; that stretch reads RVLCVDDSAL…REGMLAYSEL (118 aa). Aspartate 56 carries the post-translational modification 4-aspartylphosphate. The region spanning 152–344 is the CheB-type methylesterase domain; that stretch reads LLSSEKLIAI…QRMLAQISSG (193 aa). Active-site residues include serine 164, histidine 190, and aspartate 286.

Belongs to the CheB family. Phosphorylated by CheA. Phosphorylation of the N-terminal regulatory domain activates the methylesterase activity.

It is found in the cytoplasm. It carries out the reaction [protein]-L-glutamate 5-O-methyl ester + H2O = L-glutamyl-[protein] + methanol + H(+). The enzyme catalyses L-glutaminyl-[protein] + H2O = L-glutamyl-[protein] + NH4(+). Functionally, involved in chemotaxis. Part of a chemotaxis signal transduction system that modulates chemotaxis in response to various stimuli. Catalyzes the demethylation of specific methylglutamate residues introduced into the chemoreceptors (methyl-accepting chemotaxis proteins or MCP) by CheR. Also mediates the irreversible deamidation of specific glutamine residues to glutamic acid. The sequence is that of Protein-glutamate methylesterase/protein-glutamine glutaminase from Yersinia pseudotuberculosis serotype I (strain IP32953).